A 119-amino-acid chain; its full sequence is Basic phospholipase A2 DE-1 (119 aa).

Intrachain disulfides connect Cys-11-Cys-71, Cys-26-Cys-118, Cys-28-Cys-44, Cys-43-Cys-99, Cys-50-Cys-92, Cys-60-Cys-85, and Cys-78-Cys-90. Ca(2+)-binding residues include Tyr-27, Gly-29, Gly-31, and Asp-48. Asp-93 is a catalytic residue.

It belongs to the phospholipase A2 family. Group I subfamily. D49 sub-subfamily. Ca(2+) is required as a cofactor. In terms of tissue distribution, expressed by the venom gland.

It localises to the secreted. It carries out the reaction a 1,2-diacyl-sn-glycero-3-phosphocholine + H2O = a 1-acyl-sn-glycero-3-phosphocholine + a fatty acid + H(+). In terms of biological role, PLA2 catalyzes the calcium-dependent hydrolysis of the 2-acyl groups in 3-sn-phosphoglycerides. The sequence is that of Basic phospholipase A2 DE-1 from Hemachatus haemachatus (Rinkhals).